A 391-amino-acid polypeptide reads, in one-letter code: Succinyl-diaminopimelate desuccinylase (391 aa).

His78 serves as a coordination point for Zn(2+). Residue Asp80 is part of the active site. Asp111 contacts Zn(2+). Glu145 acts as the Proton acceptor in catalysis. The Zn(2+) site is built by Glu146, Glu174, and His360.

The protein belongs to the peptidase M20A family. DapE subfamily. Homodimer. Zn(2+) is required as a cofactor. The cofactor is Co(2+).

It catalyses the reaction N-succinyl-(2S,6S)-2,6-diaminopimelate + H2O = (2S,6S)-2,6-diaminopimelate + succinate. It participates in amino-acid biosynthesis; L-lysine biosynthesis via DAP pathway; LL-2,6-diaminopimelate from (S)-tetrahydrodipicolinate (succinylase route): step 3/3. Catalyzes the hydrolysis of N-succinyl-L,L-diaminopimelic acid (SDAP), forming succinate and LL-2,6-diaminopimelate (DAP), an intermediate involved in the bacterial biosynthesis of lysine and meso-diaminopimelic acid, an essential component of bacterial cell walls. The chain is Succinyl-diaminopimelate desuccinylase from Acidovorax ebreus (strain TPSY) (Diaphorobacter sp. (strain TPSY)).